The sequence spans 148 residues: Large ribosomal subunit protein uL15 (148 aa).

The interval 1–61 is disordered; the sequence is MELNNLKPAI…GGQMPMQRRL (61 aa). The span at 30–39 shows a compositional bias: basic residues; sequence TATKGHKGQK.

Belongs to the universal ribosomal protein uL15 family. As to quaternary structure, part of the 50S ribosomal subunit.

Binds to the 23S rRNA. The polypeptide is Large ribosomal subunit protein uL15 (Geobacter metallireducens (strain ATCC 53774 / DSM 7210 / GS-15)).